A 361-amino-acid polypeptide reads, in one-letter code: tRNA/tmRNA (uracil-C(5))-methyltransferase (361 aa).

Positions 185, 213, 218, 234, and 294 each coordinate S-adenosyl-L-methionine. The active-site Nucleophile is Cys319. The active-site Proton acceptor is Glu353.

Belongs to the class I-like SAM-binding methyltransferase superfamily. RNA M5U methyltransferase family. TrmA subfamily.

The enzyme catalyses uridine(54) in tRNA + S-adenosyl-L-methionine = 5-methyluridine(54) in tRNA + S-adenosyl-L-homocysteine + H(+). It carries out the reaction uridine(341) in tmRNA + S-adenosyl-L-methionine = 5-methyluridine(341) in tmRNA + S-adenosyl-L-homocysteine + H(+). Functionally, dual-specificity methyltransferase that catalyzes the formation of 5-methyluridine at position 54 (m5U54) in all tRNAs, and that of position 341 (m5U341) in tmRNA (transfer-mRNA). In Azotobacter vinelandii (strain DJ / ATCC BAA-1303), this protein is tRNA/tmRNA (uracil-C(5))-methyltransferase.